A 390-amino-acid chain; its full sequence is 2-oxoisovalerate dehydrogenase subunit beta, mitochondrial (390 aa).

The transit peptide at 1-48 (MAAVAARAGGLLWLRAAGAERRRCGLRCAALVQGFLQPGGEDTAQKRR) directs the protein to the mitochondrion. Position 150 (Tyr150) interacts with thiamine diphosphate. 5 residues coordinate K(+): Gly176, Leu178, Thr179, Cys226, and Asp229. At Lys230 the chain carries N6-acetyllysine. Asn231 provides a ligand contact to K(+). Lys239 bears the N6-acetyllysine mark.

As to quaternary structure, heterotetramer of 2 alpha/BCKDHA and 2 beta chains/BCKDHB that forms the branched-chain alpha-keto acid decarboxylase (E1) component of the BCKD complex. The branched-chain alpha-ketoacid dehydrogenase is a large complex composed of three major building blocks E1, E2 and E3. It is organized around E2, a 24-meric cubic core composed of DBT, to which are associated 6 to 12 copies of E1, and approximately 6 copies of the dehydrogenase E3, a DLD dimer. Requires thiamine diphosphate as cofactor.

Its subcellular location is the mitochondrion matrix. The catalysed reaction is N(6)-[(R)-lipoyl]-L-lysyl-[protein] + 3-methyl-2-oxobutanoate + H(+) = N(6)-[(R)-S(8)-2-methylpropanoyldihydrolipoyl]-L-lysyl-[protein] + CO2. Functionally, together with BCKDHA forms the heterotetrameric E1 subunit of the mitochondrial branched-chain alpha-ketoacid dehydrogenase (BCKD) complex. The BCKD complex catalyzes the multi-step oxidative decarboxylation of alpha-ketoacids derived from the branched-chain amino-acids valine, leucine and isoleucine producing CO2 and acyl-CoA which is subsequently utilized to produce energy. The E1 subunit catalyzes the first step with the decarboxylation of the alpha-ketoacid forming an enzyme-product intermediate. A reductive acylation mediated by the lipoylamide cofactor of E2 extracts the acyl group from the E1 active site for the next step of the reaction. The chain is 2-oxoisovalerate dehydrogenase subunit beta, mitochondrial from Mus musculus (Mouse).